The chain runs to 906 residues: Gamma-tubulin complex component 3 homolog (906 aa).

Residues 208 to 229 (GQQPSQQSTTTKGLPNTVSRNV) show a composition bias toward polar residues. The interval 208-242 (GQQPSQQSTTTKGLPNTVSRNVPRTRREGDSSGSV) is disordered.

Belongs to the TUBGCP family. In terms of assembly, interacts with gamma-tubulin.

The protein resides in the cytoplasm. It is found in the cytoskeleton. Its subcellular location is the microtubule organizing center. The protein localises to the centrosome. Its function is as follows. Necessary for the recruitment of gamma-tubulin to the centrosome and for the formation of a functional centrosome. The polypeptide is Gamma-tubulin complex component 3 homolog (tubgcp3) (Xenopus laevis (African clawed frog)).